A 354-amino-acid chain; its full sequence is DNA polymerase IV (354 aa).

In terms of domain architecture, UmuC spans 6–187 (IIHIDCDCFY…LPVARLHGVG (182 aa)). Asp-10 and Asp-105 together coordinate Mg(2+). Glu-106 is a catalytic residue.

The protein belongs to the DNA polymerase type-Y family. Monomer. Mg(2+) is required as a cofactor.

The protein localises to the cytoplasm. It catalyses the reaction DNA(n) + a 2'-deoxyribonucleoside 5'-triphosphate = DNA(n+1) + diphosphate. Poorly processive, error-prone DNA polymerase involved in untargeted mutagenesis. Copies undamaged DNA at stalled replication forks, which arise in vivo from mismatched or misaligned primer ends. These misaligned primers can be extended by PolIV. Exhibits no 3'-5' exonuclease (proofreading) activity. May be involved in translesional synthesis, in conjunction with the beta clamp from PolIII. This is DNA polymerase IV from Pseudomonas entomophila (strain L48).